A 501-amino-acid chain; its full sequence is Mitochondrial inner membrane i-AAA protease supercomplex subunit MGR3 (501 aa).

Over 1 to 77 (MLLQGMRLSQ…PKPNLKKKNR (77 aa)) the chain is Mitochondrial matrix. Positions 39 to 72 (RPPASNFNTQESAPIPESPANSPTRPQMAPKPNL) are disordered. The helical transmembrane segment at 78-95 (SLMYSIIGVSIVGLYFWF) threads the bilayer. Topologically, residues 96 to 501 (KSNSRKQKLP…LKAAKKEGLN (406 aa)) are mitochondrial intermembrane. 4 TPR repeats span residues 109 to 144 (QKVW…CDRS), 154 to 187 (TRIE…FFEA), 386 to 420 (GTYI…AKRN), and 440 to 473 (ALST…AKET).

This sequence belongs to the MGR3 family. As to quaternary structure, component of the mitochondrial inner membrane i-AAA protease supercomplex composed of MGR1, MGR3 and YME1. With MGR1, forms a subcomplex that binds to YME1 and to substrates to facilitate proteolysis.

It is found in the mitochondrion inner membrane. Component of the mitochondrial inner membrane i-AAA protease supercomplex, which degrades misfolded mitochondrial proteins. Together with MGR1, functions in an adapter complex that targets substrates to the i-AAA protease for degradation. Required for growth of cells lacking the mitochondrial genome. The chain is Mitochondrial inner membrane i-AAA protease supercomplex subunit MGR3 (MGR3) from Saccharomyces cerevisiae (strain ATCC 204508 / S288c) (Baker's yeast).